The following is a 314-amino-acid chain: SERTA domain-containing protein 2 (314 aa).

The SERTA domain occupies 33–80 (YTLQRQTIFNISLMKLYNHRPLTEPSLQKTVLINNMLRRIQEELKQEG). 2 disordered regions span residues 77–119 (KQEG…HPCD) and 181–222 (PTST…SKLM). A compositionally biased stretch (polar residues) spans 87–97 (TPSSQPTTEPS). Over residues 182–193 (TSTSTEAATAAT) the composition is skewed to low complexity. The span at 210–221 (GPQESRADDSKL) shows a compositional bias: basic and acidic residues. A required for transactivation activity region spans residues 235–311 (TGFLTDLTLD…TELDHIMEVL (77 aa)). The short motif at 238–243 (LTDLTL) is the Nuclear export signal (NES) element.

In terms of assembly, interacts with XPO1; which mediates nuclear export. Interacts with TFDP1; modulates transactivation activity of TFDP1/E2F complexes. In terms of processing, polyubiquitinated, which promotes proteasomal degradation. As to expression, expressed in adipose tissue.

The protein resides in the nucleus. Its subcellular location is the cytoplasm. Its function is as follows. Acts at E2F-responsive promoters as coregulator to integrate signals provided by PHD- and/or bromodomain-containing transcription factors. May act as coactivator as well as corepressor of E2F1-TFDP1 and E2F4-TFDP1 complexes on E2F consensus binding sites, which would activate or inhibit E2F-target genes expression. Modulates fat storage by down-regulating the expression of key genes involved in adipocyte lipolysis, thermogenesis and oxidative metabolism. In Homo sapiens (Human), this protein is SERTA domain-containing protein 2 (SERTAD2).